A 312-amino-acid polypeptide reads, in one-letter code: Aspartate carbamoyltransferase catalytic subunit (312 aa).

Residues R55 and T56 each coordinate carbamoyl phosphate. K83 lines the L-aspartate pocket. Residues R105, H138, and Q141 each coordinate carbamoyl phosphate. L-aspartate contacts are provided by R171 and R225. Carbamoyl phosphate-binding residues include G266 and P267.

It belongs to the aspartate/ornithine carbamoyltransferase superfamily. ATCase family. In terms of assembly, heterododecamer (2C3:3R2) of six catalytic PyrB chains organized as two trimers (C3), and six regulatory PyrI chains organized as three dimers (R2).

The enzyme catalyses carbamoyl phosphate + L-aspartate = N-carbamoyl-L-aspartate + phosphate + H(+). The protein operates within pyrimidine metabolism; UMP biosynthesis via de novo pathway; (S)-dihydroorotate from bicarbonate: step 2/3. Functionally, catalyzes the condensation of carbamoyl phosphate and aspartate to form carbamoyl aspartate and inorganic phosphate, the committed step in the de novo pyrimidine nucleotide biosynthesis pathway. The polypeptide is Aspartate carbamoyltransferase catalytic subunit (Corynebacterium glutamicum (strain ATCC 13032 / DSM 20300 / JCM 1318 / BCRC 11384 / CCUG 27702 / LMG 3730 / NBRC 12168 / NCIMB 10025 / NRRL B-2784 / 534)).